The primary structure comprises 171 residues: Ribosome maturation factor RimM (171 aa).

Residues 96-170 (AEGEYYYHEI…LVTIHVMEGL (75 aa)) enclose the PRC barrel domain.

The protein belongs to the RimM family. Binds ribosomal protein uS19.

Its subcellular location is the cytoplasm. In terms of biological role, an accessory protein needed during the final step in the assembly of 30S ribosomal subunit, possibly for assembly of the head region. Essential for efficient processing of 16S rRNA. May be needed both before and after RbfA during the maturation of 16S rRNA. It has affinity for free ribosomal 30S subunits but not for 70S ribosomes. The sequence is that of Ribosome maturation factor RimM from Bacillus cereus (strain G9842).